The primary structure comprises 132 residues: Galectin-2 (132 aa).

The Galectin domain maps to 4 to 131 (ELEVKNMDMK…GFNMSSFKLK (128 aa)). 65-71 (WGQEQRE) serves as a coordination point for a beta-D-galactoside.

In terms of assembly, homodimer.

Functionally, this protein binds beta-galactoside. Its physiological function is not yet known. This is Galectin-2 (LGALS2) from Homo sapiens (Human).